A 502-amino-acid chain; its full sequence is Protein ANKUB1 (502 aa).

The sequence is that of Protein ANKUB1 (ANKUB1) from Homo sapiens (Human).